Consider the following 339-residue polypeptide: NADH-quinone oxidoreductase subunit H (339 aa).

Helical transmembrane passes span 9–29 (IFPL…LILC), 50–70 (PNVV…KLLF), 82–102 (ILFI…WAVI), 115–135 (VGVL…IIAG), 161–181 (MGLV…SEII), 187–207 (MPWW…ISVL), 235–255 (MGFA…SAMT), 275–295 (IPGF…FLWI), and 311–331 (GWKV…SVLV).

This sequence belongs to the complex I subunit 1 family. In terms of assembly, NDH-1 is composed of 14 different subunits. Subunits NuoA, H, J, K, L, M, N constitute the membrane sector of the complex.

It localises to the cell membrane. The catalysed reaction is a quinone + NADH + 5 H(+)(in) = a quinol + NAD(+) + 4 H(+)(out). In terms of biological role, NDH-1 shuttles electrons from NADH, via FMN and iron-sulfur (Fe-S) centers, to quinones in the respiratory chain. The immediate electron acceptor for the enzyme in this species is believed to be ubiquinone. Couples the redox reaction to proton translocation (for every two electrons transferred, four hydrogen ions are translocated across the cytoplasmic membrane), and thus conserves the redox energy in a proton gradient. This subunit may bind ubiquinone. The chain is NADH-quinone oxidoreductase subunit H from Rickettsia africae (strain ESF-5).